A 61-amino-acid chain; its full sequence is Short neurotoxin 1 (61 aa).

4 disulfides stabilise this stretch: cysteine 3–cysteine 23, cysteine 17–cysteine 40, cysteine 42–cysteine 53, and cysteine 54–cysteine 59.

It belongs to the three-finger toxin family. Short-chain subfamily. Type I alpha-neurotoxin sub-subfamily. In terms of tissue distribution, expressed by the venom gland.

Its subcellular location is the secreted. Functionally, binds to muscle nicotinic acetylcholine receptor (nAChR) and inhibit acetylcholine from binding to the receptor, thereby impairing neuromuscular transmission. The chain is Short neurotoxin 1 from Naja samarensis (Peters' cobra).